The sequence spans 187 residues: Elongation factor P (187 aa).

The protein belongs to the elongation factor P family.

It localises to the cytoplasm. The protein operates within protein biosynthesis; polypeptide chain elongation. Its function is as follows. Involved in peptide bond synthesis. Stimulates efficient translation and peptide-bond synthesis on native or reconstituted 70S ribosomes in vitro. Probably functions indirectly by altering the affinity of the ribosome for aminoacyl-tRNA, thus increasing their reactivity as acceptors for peptidyl transferase. The protein is Elongation factor P of Tolumonas auensis (strain DSM 9187 / NBRC 110442 / TA 4).